The chain runs to 552 residues: CTP synthase (552 aa).

Residues 1 to 265 (MTKFVFVTGG…DRIVCEKLAL (265 aa)) are amidoligase domain. CTP is bound at residue Ser-13. Ser-13 lines the UTP pocket. ATP-binding positions include 14-19 (SLGKGI) and Asp-71. 2 residues coordinate Mg(2+): Asp-71 and Glu-139. CTP-binding positions include 146-148 (DIE), 186-191 (KTKPTQ), and Lys-222. UTP-binding positions include 186–191 (KTKPTQ) and Lys-222. The 256-residue stretch at 290–545 (TIGMVGKYVD…IKAALAHKQA (256 aa)) folds into the Glutamine amidotransferase type-1 domain. Position 351 (Gly-351) interacts with L-glutamine. Cys-378 acts as the Nucleophile; for glutamine hydrolysis in catalysis. L-glutamine-binding positions include 379-382 (LGMQ), Glu-402, and Arg-468. Active-site residues include His-518 and Glu-520.

This sequence belongs to the CTP synthase family. As to quaternary structure, homotetramer.

The enzyme catalyses UTP + L-glutamine + ATP + H2O = CTP + L-glutamate + ADP + phosphate + 2 H(+). It carries out the reaction L-glutamine + H2O = L-glutamate + NH4(+). It catalyses the reaction UTP + NH4(+) + ATP = CTP + ADP + phosphate + 2 H(+). It functions in the pathway pyrimidine metabolism; CTP biosynthesis via de novo pathway; CTP from UDP: step 2/2. Its activity is regulated as follows. Allosterically activated by GTP, when glutamine is the substrate; GTP has no effect on the reaction when ammonia is the substrate. The allosteric effector GTP functions by stabilizing the protein conformation that binds the tetrahedral intermediate(s) formed during glutamine hydrolysis. Inhibited by the product CTP, via allosteric rather than competitive inhibition. Functionally, catalyzes the ATP-dependent amination of UTP to CTP with either L-glutamine or ammonia as the source of nitrogen. Regulates intracellular CTP levels through interactions with the four ribonucleotide triphosphates. This is CTP synthase from Herminiimonas arsenicoxydans.